We begin with the raw amino-acid sequence, 663 residues long: uncharacterized protein (663 aa).

207–214 (GPPGTGKT) serves as a coordination point for ATP.

Belongs to the DNA2/NAM7 helicase family.

This is an uncharacterized protein from Methanocaldococcus jannaschii (strain ATCC 43067 / DSM 2661 / JAL-1 / JCM 10045 / NBRC 100440) (Methanococcus jannaschii).